Reading from the N-terminus, the 164-residue chain is Large ribosomal subunit protein bL9 (164 aa).

This sequence belongs to the bacterial ribosomal protein bL9 family.

Its function is as follows. Binds to the 23S rRNA. The polypeptide is Large ribosomal subunit protein bL9 (Borrelia hermsii (strain HS1 / DAH)).